A 69-amino-acid chain; its full sequence is MRAIISVLLISAMVFSIIEAVPLEEGLQLFEAERVGCLPRNRFCNALSGPRCCSGLRCKELSIWASKCL.

Positions 1–20 are cleaved as a signal peptide; that stretch reads MRAIISVLLISAMVFSIIEA. The propeptide occupies 21–34; the sequence is VPLEEGLQLFEAER. 3 cysteine pairs are disulfide-bonded: Cys-37/Cys-53, Cys-44/Cys-58, and Cys-52/Cys-68.

It belongs to the neurotoxin 01 (U2-agtx) family. In terms of tissue distribution, expressed by the venom gland.

Its subcellular location is the secreted. Functionally, insect active toxin causing rapid but reversible paralysis in crickets. No activity shown in mammals. Does not show effect on mammalian voltage-gated calcium channels. This chain is U2-agatoxin-Ao1e, found in Agelena orientalis (Funnel-web spider).